The primary structure comprises 342 residues: NADH-ubiquinone oxidoreductase chain 2 (342 aa).

A run of 9 helical transmembrane segments spans residues 25 to 45, 58 to 78, 94 to 114, 146 to 166, 174 to 194, 195 to 215, 238 to 258, 274 to 294, and 316 to 336; these read TPWL…IPML, IKYF…ILII, MMIM…FWLP, MSSF…MGGL, ILAY…TISE, NTWE…IFMF, FMMM…GFLP, LVLL…RISF, and VVAL…TSNF.

It belongs to the complex I subunit 2 family.

It localises to the mitochondrion inner membrane. It catalyses the reaction a ubiquinone + NADH + 5 H(+)(in) = a ubiquinol + NAD(+) + 4 H(+)(out). Its function is as follows. Core subunit of the mitochondrial membrane respiratory chain NADH dehydrogenase (Complex I) that is believed to belong to the minimal assembly required for catalysis. Complex I functions in the transfer of electrons from NADH to the respiratory chain. The immediate electron acceptor for the enzyme is believed to be ubiquinone. The chain is NADH-ubiquinone oxidoreductase chain 2 (ND2) from Locusta migratoria (Migratory locust).